A 186-amino-acid chain; its full sequence is Putative CTD phosphatase-like protein 355R (186 aa).

The FCP1 homology domain occupies 2-182; sequence ENNKKKLILL…TELLKVQKTL (181 aa).

The protein belongs to the IIV-6 355R family.

In terms of biological role, may function as a phosphatase. The sequence is that of Putative CTD phosphatase-like protein 355R from Aedes vexans (Inland floodwater mosquito).